A 475-amino-acid chain; its full sequence is Methylenomycin A resistance protein (475 aa).

The next 14 helical transmembrane spans lie at 28–48 (ITALATGFVMATLDVTVVNVA), 65–85 (WIVDGYVLTFASLLMLAGGLA), 93–113 (VYLWGMGVFFLASLACALAPT), 123–143 (VQGAGAALFMPSSLSLLVFSF), 152–172 (MLGLWSAIVATSSGLGPTVGG), 173–193 (LMVSAFGWESIFLLNLPIGAI), 212–232 (LAVPGHLLWIVALAAVSFALI), 240–260 (TAGPVLTAYAVAVTAAALLAL), 285–305 (LVGFLFNFALFGSTFMLGLYF), 314–334 (FQAGLELLPMTIFFPVANIVY), 346–366 (LLTAFLLLAGAASLSMVTITA), 371–391 (WVVAVAVGVANIGAGIISPGM), 416–436 (QIGSLVGIAAMGVVLHSTSDW), and 439–459 (GAAISFLAVGLAYLLGGLSAW).

Belongs to the major facilitator superfamily.

The protein localises to the cell membrane. Functionally, resistance to the epoxide antibiotic methylenomycin A; probably by mediating its efflux. In Streptomyces coelicolor (strain ATCC BAA-471 / A3(2) / M145), this protein is Methylenomycin A resistance protein (mmr).